Reading from the N-terminus, the 179-residue chain is Large ribosomal subunit protein uL5 (179 aa).

This sequence belongs to the universal ribosomal protein uL5 family. In terms of assembly, part of the 50S ribosomal subunit; part of the 5S rRNA/L5/L18/L25 subcomplex. Contacts the 5S rRNA and the P site tRNA. Forms a bridge to the 30S subunit in the 70S ribosome.

Functionally, this is one of the proteins that bind and probably mediate the attachment of the 5S RNA into the large ribosomal subunit, where it forms part of the central protuberance. In the 70S ribosome it contacts protein S13 of the 30S subunit (bridge B1b), connecting the 2 subunits; this bridge is implicated in subunit movement. Contacts the P site tRNA; the 5S rRNA and some of its associated proteins might help stabilize positioning of ribosome-bound tRNAs. The chain is Large ribosomal subunit protein uL5 from Staphylococcus epidermidis (strain ATCC 35984 / DSM 28319 / BCRC 17069 / CCUG 31568 / BM 3577 / RP62A).